The sequence spans 391 residues: MRYFVSPFNKEAELKFPDRITIYDTTLRDGEQTPGVCLGTEEKLEIARKLDELGIHQIESGFPVVSEQERVSVKSIANEGLNAEILALCRTKKDDIDAAIDCDVDGVITFMATSDLHLKHKLKLTREEALNVCMNSIEYAKDHGLFLAFSAEDATRTDLDFLKQIYRKAENYGADRVHIADTVGAISPQGMDYLVRELRRDIKVDIALHCHNDFGMALSNSIAGLLAGGTAVSTTVNGIGERAGNTSLEELIMALRIIYEVDLGFNIGVLYELSRLVEKHTRMKVPENKPIVGRNVFRHESGIHVDAVIEEPLTYEPFLPEMIGHQRKIVLGKHSGCRAVKAKLEEYGIDVTRDELCRIVEEVKKNREKGKYINDELFYRIVKSVRGPVDF.

The Pyruvate carboxyltransferase domain occupies 20–271 (ITIYDTTLRD…DLGFNIGVLY (252 aa)).

It belongs to the alpha-IPM synthase/homocitrate synthase family.

The enzyme catalyses acetyl-CoA + 2-oxoglutarate + H2O = (2R)-homocitrate + CoA + H(+). It catalyses the reaction 2-oxoadipate + acetyl-CoA + H2O = (R)-dihomocitrate + CoA + H(+). It carries out the reaction 2-oxoheptanedioate + acetyl-CoA + H2O = (R)-trihomocitrate + CoA + H(+). It functions in the pathway organic acid metabolism; 2-oxosuberate biosynthesis. Functionally, catalyzes the condensation of alpha-ketoglutarate and acetyl-CoA to form (R)-homocitrate. Can also catalyze the condensation of alpha-ketoadipate with acetyl-CoA to form (R)-homo(2)citrate, and the condensation of alpha-ketopimelate with acetyl-CoA to form (R)-homo(3)citrate. These reactions are part of the biosynthesis pathway of coenzyme B and biotin. The protein is Homocitrate synthase AksA (aksA) of Methanothermobacter thermautotrophicus (strain ATCC 29096 / DSM 1053 / JCM 10044 / NBRC 100330 / Delta H) (Methanobacterium thermoautotrophicum).